A 402-amino-acid polypeptide reads, in one-letter code: Multidrug resistance protein MdtH (402 aa).

Residues 1 to 12 are Cytoplasmic-facing; the sequence is MSRVSQARNLGK. Residues 13–33 traverse the membrane as a helical segment; sequence YFLLIDNMLVVLGFFVVFPLI. The Periplasmic segment spans residues 34 to 98; sequence SIRFIDQMGW…GFATMGIAHE (65 aa). The helical transmembrane segment at 99–116 threads the bilayer; the sequence is PWLLWFSCFLSGLGGTLF. Residues 117–138 lie on the Cytoplasmic side of the membrane; sequence DPPRSALVVKLIRPEQRGRFFS. The chain crosses the membrane as a helical span at residues 139 to 159; that stretch reads LLMMQDSAGAVIGALLGSWLL. The Periplasmic segment spans residues 160-164; the sequence is QYDFR. A helical membrane pass occupies residues 165–185; sequence LVCATGAILFILCALFNAWLL. The Cytoplasmic portion of the chain corresponds to 186-213; the sequence is PAWKLSTVRTPVREGMRRVMSDKRFVTY. Residues 214–234 traverse the membrane as a helical segment; that stretch reads VLTLAGYYMLAVQVMLMLPIM. Over 235 to 243 the chain is Periplasmic; that stretch reads VNDIAGSPA. The helical transmembrane segment at 244 to 264 threads the bilayer; sequence AVKWMYAIEACLSLTLLYPIA. Residues 265-276 are Cytoplasmic-facing; that stretch reads RWSEKRFRLEHR. Residues 277 to 297 traverse the membrane as a helical segment; that stretch reads LMAGLLVMSLSMIPIGMVGNL. The Periplasmic segment spans residues 298–299; sequence QQ. A helical transmembrane segment spans residues 300–320; that stretch reads LFTLICAFYIGSVIAEPARET. Over 321 to 339 the chain is Cytoplasmic; that stretch reads LSASLADARARGSYMGFSR. The helical transmembrane segment at 340 to 360 threads the bilayer; it reads LGLAIGGAIGYIGGGWLFDMG. Topologically, residues 361–367 are periplasmic; that stretch reads KALTQPE. A helical transmembrane segment spans residues 368 to 388; that stretch reads LPWMMLGIIGFITFLALGWQF. The Cytoplasmic portion of the chain corresponds to 389–402; sequence SHKRTPRRMLEPGA.

This sequence belongs to the major facilitator superfamily. DHA1 family. MdtH (TC 2.A.1.2.21) subfamily.

It is found in the cell inner membrane. This Salmonella paratyphi C (strain RKS4594) protein is Multidrug resistance protein MdtH.